Consider the following 53-residue polypeptide: Minor histocompatibility protein HMSD variant form (53 aa).

As to quaternary structure, ACC-6 forms a complex with MHC HLA-B*4403. In terms of tissue distribution, highly expressed in dendritic cells and primary leukemia cells, especially those of myeloid lineage. ACC-6 expression is limited to cells of the hematopoietic lineage.

This splice variant of HMSD is the precursor of the histocompatibility antigen ACC-6. More generally, minor histocompatibility antigens (mHags) refer to immunogenic peptide which, when complexed with MHC, can generate an immune response after recognition by specific T-cells. The peptides are derived from polymorphic intracellular proteins, which are cleaved by normal pathways of antigen processing. The binding of these peptides to MHC class I or class II molecules and its expression on the cell surface can stimulate T-cell responses and thereby trigger graft rejection or graft-versus-host disease (GVHD) after hematopoietic stem cell transplantation from HLA-identical sibling donor. GVHD is a frequent complication after bone marrow transplantation (BMT), due to mismatch of minor histocompatibility antigen in HLA-matched sibling marrow transplants. However, associated with GVHD, a favorable graft-versus-leukemia (GVL) can be induced by donor-recipient disparities in mHags. ACC-6 is presented to the cell surface by MHC HLA-B*4403. This complex specifically elicits donor-cytotoxic T-lymphocyte (CTL) reactivity against hematologic malignancies after treatment by HLA-identical allogenic BMT. It induces cell recognition and lysis by CTL. Immunogenicity of most autosomal mHags results from single-nucleotide polymorphisms that cause amino-acid substitutions within epitopes, leading to the differential recognition of peptides between donor and recipient. This is Minor histocompatibility protein HMSD variant form (HMSD) from Homo sapiens (Human).